The following is a 207-amino-acid chain: Cyclic di-AMP synthase CdaS (207 aa).

Residues 13–37 (AFKGKIQVYLEQILGDASLILKTLH) are a coiled coil. The 143-residue stretch at 63-205 (SFYLQSYIEE…DGVLYPLISP (143 aa)) folds into the DAC domain.

The protein belongs to the adenylate cyclase family. DacB/CdaS subfamily. Forms dimers and probably also hexamers; the dimer may be active while the hexamer may not be active.

The enzyme catalyses 2 ATP = 3',3'-c-di-AMP + 2 diphosphate. In terms of biological role, one of 3 paralogous diadenylate cyclases (DAC) in this bacteria, catalyzing the condensation of 2 ATP molecules into cyclic di-AMP (c-di-AMP). Upon expression in E.coli leads to c-di-AMP synthesis. Overexpression of the hyperactive mutant (L44F) in the absence of c-di-AMP phosphodiesterase GdpP leads to growth defects in log phase (long curly cell filaments) that disappear upon sporulation; spore formation is normal, showing sporulation is insensitive to the excess c-di-AMP. In B.subtilis c-di-AMP is a second messenger that mediates growth, DNA repair and cell wall homeostasis; it is toxic when present in excess. The protein is Cyclic di-AMP synthase CdaS of Bacillus subtilis (strain 168).